A 483-amino-acid chain; its full sequence is MSECSTATDLARAVQARETTPQALLEAARRRAEAARDLNALISLNDRADEQAARVQVRLDAGETLPLAGVPIVVKDNLNVIGTRTTCGSRILANYVSPYDATAVERLTGAGAVIIGKANMDEFAMGSSTESSAWGPTLNPWDRERVPGGSSGGSAVAVAANLTPVALGSDTGGSVRQPAAFTGIYGLKPTYGRVSRYGLVAYASSLDQIGPFARSAADLALLMNVLAGHDPRDATSLDAPPAFRPGTPDDLQGLRVGVIREALEGNTPGVEAALNATLDALRGAGATVREVSVPSVQHAIAAYYLIATPEASSNLARYDGMVYGERVSAPDAVSSMTLTREQGFGREVKRRIMLGTYALSSGYYDAYYSKAMKVRRLIAQDFARAFGNVDVLVTPTSPFPAFRRGEKTQDPLAMYAADVDTVAINLAGLPALSVPAGFERVDGVRLPVGVQLIAPPLQDERLVALAGGLEGIGAVRMEVAPAS.

Residues K75 and S150 each act as charge relay system in the active site. The Acyl-ester intermediate role is filled by S174.

This sequence belongs to the amidase family. GatA subfamily. In terms of assembly, heterotrimer of A, B and C subunits.

It carries out the reaction L-glutamyl-tRNA(Gln) + L-glutamine + ATP + H2O = L-glutaminyl-tRNA(Gln) + L-glutamate + ADP + phosphate + H(+). Functionally, allows the formation of correctly charged Gln-tRNA(Gln) through the transamidation of misacylated Glu-tRNA(Gln) in organisms which lack glutaminyl-tRNA synthetase. The reaction takes place in the presence of glutamine and ATP through an activated gamma-phospho-Glu-tRNA(Gln). The polypeptide is Glutamyl-tRNA(Gln) amidotransferase subunit A (Deinococcus geothermalis (strain DSM 11300 / CIP 105573 / AG-3a)).